The following is a 331-amino-acid chain: Beta-ketoacyl-[acyl-carrier-protein] synthase III (331 aa).

Residues C115 and H255 contribute to the active site. Positions 256-260 are ACP-binding; that stretch reads QANFR. The active site involves N285.

It belongs to the thiolase-like superfamily. FabH family. Homodimer.

The protein localises to the cytoplasm. It catalyses the reaction malonyl-[ACP] + acetyl-CoA + H(+) = 3-oxobutanoyl-[ACP] + CO2 + CoA. It participates in lipid metabolism; fatty acid biosynthesis. Catalyzes the condensation reaction of fatty acid synthesis by the addition to an acyl acceptor of two carbons from malonyl-ACP. Catalyzes the first condensation reaction which initiates fatty acid synthesis and may therefore play a role in governing the total rate of fatty acid production. Possesses both acetoacetyl-ACP synthase and acetyl transacylase activities. Its substrate specificity determines the biosynthesis of branched-chain and/or straight-chain of fatty acids. This is Beta-ketoacyl-[acyl-carrier-protein] synthase III from Helicobacter pylori (strain Shi470).